A 406-amino-acid chain; its full sequence is LIM/homeobox protein Lhx1 (406 aa).

LIM zinc-binding domains lie at C4–D54 and C63–D117. The span at A125–G136 shows a compositional bias: polar residues. 2 disordered regions span residues A125–I187 and F296–V372. Low complexity predominate over residues S137 to P148. Basic and acidic residues predominate over residues D151 to G167. A DNA-binding region (homeobox) is located at residues R180–K239.

Its subcellular location is the nucleus. Functionally, transcriptional factor that defines subclasses of motoneurons that segregate into columns in the spinal cord and select distinct axon pathways. Acts in conjunction with ISL-2. This Gallus gallus (Chicken) protein is LIM/homeobox protein Lhx1 (LHX1).